A 178-amino-acid chain; its full sequence is Fibroin heavy chain (178 aa).

Residues 1–21 (MRVKTFVILCCALQYVAYTNA) form the signal peptide. The highly repetitive stretch occupies residues 149 to 178 (AVGAGAGAGAAAGSGAGAGAGYGAASGAGA).

Silk fibroin elementary unit consists in a disulfide-linked heavy and light chain and a p25 glycoprotein in molar ratios of 6:6:1. This results in a complex of approximately 2.3 MDa. In terms of processing, the interchain disulfide bridge is essential for the intracellular transport and secretion of fibroin. As to expression, produced exclusively in the posterior (PSG) section of silk glands, which are essentially modified salivary glands.

In terms of biological role, core component of the silk filament; a strong, insoluble and chemically inert fiber. The sequence is that of Fibroin heavy chain (FIBH) from Bombyx mandarina (Wild silk moth).